The chain runs to 205 residues: Arginine exporter protein ArgO (205 aa).

The next 6 helical transmembrane spans lie at 1–21 (MLAV…PLGP), 37–57 (LMVA…GIFG), 68–88 (LLAL…WGAF), 112–132 (VVTM…TFVV), 147–167 (WFAL…ALLA), and 182–202 (IINT…AWQG).

This sequence belongs to the LysE/ArgO transporter (TC 2.A.75) family.

It is found in the cell inner membrane. The catalysed reaction is L-arginine(in) = L-arginine(out). Involved in the export of arginine. Important to control the intracellular level of arginine and the correct balance between arginine and lysine. This Serratia proteamaculans (strain 568) protein is Arginine exporter protein ArgO.